A 419-amino-acid chain; its full sequence is Synaptotagmin-2 (419 aa).

Topologically, residues 1-62 are vesicular; it reads MRNIFKRNQE…NEINKIPLPP (62 aa). The tract at residues 16 to 39 is disordered; the sequence is ATTTATMPIGPVDNSTESGGAGES. The N-linked (GlcNAc...) asparagine glycan is linked to asparagine 29. Residues 63–83 traverse the membrane as a helical segment; it reads WALIAIAVVAGLLLLTCCFCI. Topologically, residues 84 to 419 are cytoplasmic; it reads CKKCCCKKKK…EVDALLGKNK (336 aa). Residues 99 to 138 are disordered; sequence GKGMKNAMNMKDMKGGQDDDDAETGLTEGEGEGEEEKEPE. Residues 116–136 show a composition bias toward acidic residues; that stretch reads DDDDAETGLTEGEGEGEEEKE. Residues threonine 122 and threonine 125 each carry the phosphothreonine modification. The segment at 133-379 is phospholipid binding; sequence EEKEPENLGK…AIGKIFVGSN (247 aa). 2 consecutive C2 domains span residues 139–258 and 270–403; these read NLGK…EEWR and KLGD…AQWH. Residues leucine 169, aspartate 170, and aspartate 176 each contribute to the Ca(2+) site. Threonine 199 carries the phosphothreonine modification. Tyrosine 227 is modified (phosphotyrosine). Ca(2+)-binding residues include aspartate 228, phenylalanine 229, aspartate 230, serine 233, lysine 234, aspartate 236, aspartate 301, aspartate 307, aspartate 361, and aspartate 363. Position 383 is a phosphothreonine (threonine 383).

It belongs to the synaptotagmin family. As to quaternary structure, homotetramer. Heterodimer; heterodimerizes with SYT1 in presence of calcium. Interacts with STON2. Interacts with SCAMP5. Interacts with PRRT2. Ca(2+) is required as a cofactor. Phosphorylation at Thr-199 by WNK1, changes the calcium requirement for SYT2-binding to phospholipid membranes. As to expression, expressed at the neuromuscular junction. Expressed in melanocytes.

The protein resides in the cytoplasmic vesicle. It localises to the secretory vesicle. It is found in the synaptic vesicle membrane. Its subcellular location is the chromaffin granule membrane. The protein localises to the cytoplasm. Exhibits calcium-dependent phospholipid and inositol polyphosphate binding properties. May have a regulatory role in the membrane interactions during trafficking of synaptic vesicles at the active zone of the synapse. Plays a role in dendrite formation by melanocytes. The chain is Synaptotagmin-2 from Homo sapiens (Human).